The primary structure comprises 514 residues: MNEEQRKAGTINILDERDRKVEKDYSKYFENIYQPPSLKEARKRGKQDINYNRDFHIEDKFEGMGKGRTFLIKTYGCQMNAHDTEVMAGILQALGYTATEDINEADVILINTCAIRENAENKVFSEIGNLKHLKKNRPEALIGVCGCMSQEESVVNKILKSYQNVDMIFGTHNIHKLPEILEEAYLSKAMVVEVWSKEGDIIENLPKVREGSTKAWVNIMYGCDKFCTYCIVPFTRGKERSRRPEDIIEEVRGLARDGYKEITLLGQNVNSYGKDIKDLEYGLGDLLEDISKIDIPRVRFTTSHPWDFTDRMIEVIAKGGNIVPHIHLPVQSGNNAVLKIMGRKYTRESYLDLVNRIKKSIPNVALTTDIIVGYPNETEEQFEETLSLYDEVQFEHAYTYLYSQRDGTPAAKMKDNVPEDVKKARLQRLNKKVGHYSEKAMNQYEGKTVTVLCEGSSKKDDTVLAGYTEKNKLVNFKGPREAIGKLVNVEIDETKQYSLNGTFKEFNDAPLVTN.

The 119-residue stretch at 68–186 (RTFLIKTYGC…LPEILEEAYL (119 aa)) folds into the MTTase N-terminal domain. 6 residues coordinate [4Fe-4S] cluster: cysteine 77, cysteine 113, cysteine 147, cysteine 223, cysteine 227, and cysteine 230. Positions 209 to 439 (REGSTKAWVN…NKKVGHYSEK (231 aa)) constitute a Radical SAM core domain. The TRAM domain occupies 442 to 505 (NQYEGKTVTV…QYSLNGTFKE (64 aa)).

It belongs to the methylthiotransferase family. MiaB subfamily. In terms of assembly, monomer. [4Fe-4S] cluster serves as cofactor.

Its subcellular location is the cytoplasm. The catalysed reaction is N(6)-dimethylallyladenosine(37) in tRNA + (sulfur carrier)-SH + AH2 + 2 S-adenosyl-L-methionine = 2-methylsulfanyl-N(6)-dimethylallyladenosine(37) in tRNA + (sulfur carrier)-H + 5'-deoxyadenosine + L-methionine + A + S-adenosyl-L-homocysteine + 2 H(+). Functionally, catalyzes the methylthiolation of N6-(dimethylallyl)adenosine (i(6)A), leading to the formation of 2-methylthio-N6-(dimethylallyl)adenosine (ms(2)i(6)A) at position 37 in tRNAs that read codons beginning with uridine. The sequence is that of tRNA-2-methylthio-N(6)-dimethylallyladenosine synthase from Staphylococcus haemolyticus (strain JCSC1435).